The sequence spans 200 residues: BmK-YA precursor (200 aa).

The N-terminal stretch at 1-23 (MIFHQFYSILILCLIFPNQVVQS) is a signal peptide. Positions 24-34 (DKERQDWIPSD) are excised as a propeptide. A disordered region spans residues 30-200 (WIPSDYGGYM…GYMNPAGRSD (171 aa)). A42 carries the alanine amide modification. Residues 45–100 (SDEERQDWIPSDYGGHMNPAGRSDEERQDWIPSDYGGHMNPAGRSNEERQDWIPSD) constitute a propeptide that is removed on maturation. A108 bears the Alanine amide mark. Positions 111–144 (SDEERQDWIPSDYGGHMNPAGRSNEERQDWIPSD) are excised as a propeptide. A152 carries the alanine amide modification. Residues 155–188 (SDEERQDWIPSDYGGHMNPAGRSDEERQDWIPSD) constitute a propeptide that is removed on maturation. An Alanine amide modification is found at A196. The propeptide occupies 199–200 (SD).

As to expression, venom gland.

It is found in the secreted. Synthetic BmK-YA activates human opioid receptors in vitro, with highest activity on the delta-type/OPRD1 receptor (EC(50)=2.5 uM) and lower activity on mu-type/OPRM1 and kappa-type/OPRK1 receptors (EC(50)=17 uM and 30 uM, respectively). This Olivierus martensii (Manchurian scorpion) protein is BmK-YA precursor.